Reading from the N-terminus, the 222-residue chain is Charged multivesicular body protein 3 (222 aa).

G2 carries N-myristoyl glycine lipidation. The interval 2–113 (GLFGKTQEKP…LQKSTEVMKA (112 aa)) is intramolecular interaction with C-terminus. Positions 22-54 (KIRKEMRVVDRQIRDIQREEEKVKRSVKDAAKK) form a coiled coil. Important for autoinhibitory function regions lie at residues 59-64 (VCVVLA) and 168-169 (IL). The stretch at 149–222 (ESMDDQEEME…MQSRLATLRS (74 aa)) forms a coiled coil. The interval 151–220 (MDDQEEMEEA…EAMQSRLATL (70 aa)) is intramolecular interaction with N-terminus. An interaction with VPS4A region spans residues 151-222 (MDDQEEMEEA…MQSRLATLRS (72 aa)). K179 participates in a covalent cross-link: Glycyl lysine isopeptide (Lys-Gly) (interchain with G-Cter in ubiquitin). A disordered region spans residues 180–222 (APSKVTDALPEPEPLGAMAASEDEEEEEEALEAMQSRLATLRS). Interaction with STAMBP stretches follow at residues 196 to 222 (AMAA…TLRS), 203 to 207 (EEEEE), and 221 to 222 (RS). Residue S200 is modified to Phosphoserine. Acidic residues predominate over residues 200-210 (SEDEEEEEEAL). The MIT-interacting motif signature appears at 201 to 211 (EDEEEEEEALE).

Belongs to the SNF7 family. In terms of assembly, probable core component of the endosomal sorting required for transport complex III (ESCRT-III). ESCRT-III components are thought to multimerize to form a flat lattice on the perimeter membrane of the endosome. Several assembly forms of ESCRT-III may exist that interact and act sequentially. Forms a metastable monomer in solution; its core structure (without part of the putative autoinhibitory C-terminal acidic region) oligomerizes into a flat lattice via two different dimerization interfaces. In vitro, heteromerizes with CHMP2A (but not CHMP4) to form helical tubular structures that expose membrane-interacting sites on the outside whereas VPS4B can associate on the inside of the tubule. May interact with IGFBP7; the relevance of such interaction however remains unclear. Interacts with CHMP2A. Interacts with CHMP4A; the interaction requires the release of CHMP4A autoinhibition. Interacts with VPS4A. Interacts with STAMBP; the interaction appears to relieve the autoinhibition of CHMP3. Interacts with VTA1.

It localises to the cytoplasm. It is found in the cytosol. Its subcellular location is the membrane. The protein resides in the endosome. The protein localises to the late endosome membrane. Probable core component of the endosomal sorting required for transport complex III (ESCRT-III) which is involved in multivesicular bodies (MVBs) formation and sorting of endosomal cargo proteins into MVBs. MVBs contain intraluminal vesicles (ILVs) that are generated by invagination and scission from the limiting membrane of the endosome and mostly are delivered to lysosomes enabling degradation of membrane proteins, such as stimulated growth factor receptors, lysosomal enzymes and lipids. The MVB pathway appears to require the sequential function of ESCRT-O, -I,-II and -III complexes. ESCRT-III proteins mostly dissociate from the invaginating membrane before the ILV is released. The ESCRT machinery also functions in topologically equivalent membrane fission events, such as the terminal stages of cytokinesis and the budding of enveloped viruses (lentiviruses). ESCRT-III proteins are believed to mediate the necessary vesicle extrusion and/or membrane fission activities, possibly in conjunction with the AAA ATPase VPS4. Selectively binds to phosphatidylinositol 3,5-bisphosphate PtdIns(3,5)P2 and PtdIns(3,4)P2 in preference to other phosphoinositides tested. Involved in late stages of cytokinesis. Plays a role in endosomal sorting/trafficking of EGF receptor. The polypeptide is Charged multivesicular body protein 3 (CHMP3) (Bos taurus (Bovine)).